The following is a 185-amino-acid chain: HTH-type transcriptional regulator Hpr (185 aa).

One can recognise an HTH marR-type domain in the interval 13–157 (AMIFSQRIAQ…LIAILRNIYG (145 aa)). The H-T-H motif DNA-binding region spans 63–86 (ISEIAKFGVMHVSTAFNFSKKLEE).

Homodimer.

Negative regulator of protease production and sporulation. The sequence is that of HTH-type transcriptional regulator Hpr from Bacillus mycoides (strain KBAB4) (Bacillus weihenstephanensis).